Reading from the N-terminus, the 182-residue chain is Adenine phosphoribosyltransferase (182 aa).

The protein belongs to the purine/pyrimidine phosphoribosyltransferase family. As to quaternary structure, homodimer.

The protein resides in the cytoplasm. The enzyme catalyses AMP + diphosphate = 5-phospho-alpha-D-ribose 1-diphosphate + adenine. It participates in purine metabolism; AMP biosynthesis via salvage pathway; AMP from adenine: step 1/1. Catalyzes a salvage reaction resulting in the formation of AMP, that is energically less costly than de novo synthesis. The chain is Adenine phosphoribosyltransferase from Streptomyces avermitilis (strain ATCC 31267 / DSM 46492 / JCM 5070 / NBRC 14893 / NCIMB 12804 / NRRL 8165 / MA-4680).